The primary structure comprises 66 residues: Ribosome biogenesis protein Nop10 (66 aa).

The protein belongs to the NOP10 family.

Involved in ribosome biogenesis; more specifically in 18S rRNA pseudouridylation and in cleavage of pre-rRNA. This chain is Ribosome biogenesis protein Nop10, found in Staphylothermus marinus (strain ATCC 43588 / DSM 3639 / JCM 9404 / F1).